Here is a 151-residue protein sequence, read N- to C-terminus: Cytochrome c-type biogenesis protein CcmE (151 aa).

Residues 1–9 (MKGLKKKRR) lie on the Cytoplasmic side of the membrane. Residues 10-30 (IQIITLAFVALAGSTALIGYA) form a helical; Signal-anchor for type II membrane protein membrane-spanning segment. Topologically, residues 31-151 (MRDGINFFRS…FQHTEDQPQG (121 aa)) are periplasmic. Heme is bound by residues His-123 and Tyr-127.

It belongs to the CcmE/CycJ family.

It is found in the cell inner membrane. In terms of biological role, heme chaperone required for the biogenesis of c-type cytochromes. Transiently binds heme delivered by CcmC and transfers the heme to apo-cytochromes in a process facilitated by CcmF and CcmH. This is Cytochrome c-type biogenesis protein CcmE from Cereibacter sphaeroides (strain ATCC 17025 / ATH 2.4.3) (Rhodobacter sphaeroides).